The sequence spans 275 residues: Dermonecrotic toxin LhSicTox-alphaIV2 (275 aa).

The active site involves H5. Mg(2+) is bound by residues E25 and D27. Catalysis depends on H41, which acts as the Nucleophile. 2 disulfide bridges follow: C45–C51 and C47–C192. D85 serves as a coordination point for Mg(2+).

Belongs to the arthropod phospholipase D family. Class II subfamily. The cofactor is Mg(2+). Expressed by the venom gland.

The protein resides in the secreted. It carries out the reaction an N-(acyl)-sphingosylphosphocholine = an N-(acyl)-sphingosyl-1,3-cyclic phosphate + choline. The enzyme catalyses an N-(acyl)-sphingosylphosphoethanolamine = an N-(acyl)-sphingosyl-1,3-cyclic phosphate + ethanolamine. It catalyses the reaction a 1-acyl-sn-glycero-3-phosphocholine = a 1-acyl-sn-glycero-2,3-cyclic phosphate + choline. The catalysed reaction is a 1-acyl-sn-glycero-3-phosphoethanolamine = a 1-acyl-sn-glycero-2,3-cyclic phosphate + ethanolamine. Dermonecrotic toxins cleave the phosphodiester linkage between the phosphate and headgroup of certain phospholipids (sphingolipid and lysolipid substrates), forming an alcohol (often choline) and a cyclic phosphate. This toxin acts on sphingomyelin (SM). It may also act on ceramide phosphoethanolamine (CPE), lysophosphatidylcholine (LPC) and lysophosphatidylethanolamine (LPE), but not on lysophosphatidylserine (LPS), and lysophosphatidylglycerol (LPG). It acts by transphosphatidylation, releasing exclusively cyclic phosphate products as second products. Induces dermonecrosis, hemolysis, increased vascular permeability, edema, inflammatory response, and platelet aggregation. In Loxosceles hirsuta (Recluse spider), this protein is Dermonecrotic toxin LhSicTox-alphaIV2.